We begin with the raw amino-acid sequence, 450 residues long: Tubulin alpha chain (450 aa).

Glutamine 11 provides a ligand contact to GTP. The residue at position 40 (lysine 40) is an N6-acetyllysine. Glutamate 71, serine 140, glycine 144, threonine 145, threonine 179, asparagine 206, and asparagine 228 together coordinate GTP. Glutamate 71 contacts Mg(2+). The active site involves glutamate 254.

Belongs to the tubulin family. In terms of assembly, dimer of alpha and beta chains. A typical microtubule is a hollow water-filled tube with an outer diameter of 25 nm and an inner diameter of 15 nM. Alpha-beta heterodimers associate head-to-tail to form protofilaments running lengthwise along the microtubule wall with the beta-tubulin subunit facing the microtubule plus end conferring a structural polarity. Microtubules usually have 13 protofilaments but different protofilament numbers can be found in some organisms and specialized cells. Mg(2+) serves as cofactor. Acetylation of alpha chains at Lys-40 stabilizes microtubules and affects affinity and processivity of microtubule motors. This modification has a role in multiple cellular functions, ranging from cell motility, cell cycle progression or cell differentiation to intracellular trafficking and signaling.

The protein resides in the cytoplasm. It is found in the cytoskeleton. The catalysed reaction is GTP + H2O = GDP + phosphate + H(+). Its function is as follows. Tubulin is the major constituent of microtubules, a cylinder consisting of laterally associated linear protofilaments composed of alpha- and beta-tubulin heterodimers. Microtubules grow by the addition of GTP-tubulin dimers to the microtubule end, where a stabilizing cap forms. Below the cap, tubulin dimers are in GDP-bound state, owing to GTPase activity of alpha-tubulin. The sequence is that of Tubulin alpha chain from Tyrophagus putrescentiae (Mold mite).